Consider the following 350-residue polypeptide: Bifunctional UDP-glucose 4-epimerase and UDP-xylose 4-epimerase 1 (350 aa).

Residues 15 to 17 (GFI), 36 to 40 (DNFDN), 67 to 68 (DL), Phe-89, and Lys-93 each bind NAD(+). Ser-133 is a binding site for substrate. The Proton acceptor role is filled by Tyr-157. NAD(+) is bound by residues Lys-161 and Tyr-185.

It belongs to the NAD(P)-dependent epimerase/dehydratase family. The cofactor is NAD(+).

The catalysed reaction is UDP-alpha-D-glucose = UDP-alpha-D-galactose. It catalyses the reaction UDP-beta-L-arabinopyranose = UDP-alpha-D-xylose. The protein operates within carbohydrate metabolism; galactose metabolism. It functions in the pathway nucleotide-sugar biosynthesis; UDP-L-arabinose biosynthesis; UDP-L-arabinose from UDP-alpha-D-xylose: step 1/1. Its pathway is cell wall biogenesis; cell wall polysaccharide biosynthesis. Inhibited by Hg(2+). Functionally, catalyzes the interconversion between UDP-glucose and UDP-galactose and the interconversion between UDP-arabinose and UDP-xylose. The chain is Bifunctional UDP-glucose 4-epimerase and UDP-xylose 4-epimerase 1 from Pisum sativum (Garden pea).